A 132-amino-acid polypeptide reads, in one-letter code: Small ribosomal subunit protein uS11 (132 aa).

Belongs to the universal ribosomal protein uS11 family. In terms of assembly, part of the 30S ribosomal subunit. Interacts with proteins S7 and S18. Binds to IF-3.

In terms of biological role, located on the platform of the 30S subunit, it bridges several disparate RNA helices of the 16S rRNA. Forms part of the Shine-Dalgarno cleft in the 70S ribosome. The polypeptide is Small ribosomal subunit protein uS11 (Chlamydia muridarum (strain MoPn / Nigg)).